Consider the following 84-residue polypeptide: Small ribosomal subunit protein uS17 (84 aa).

It belongs to the universal ribosomal protein uS17 family. Part of the 30S ribosomal subunit.

Functionally, one of the primary rRNA binding proteins, it binds specifically to the 5'-end of 16S ribosomal RNA. This chain is Small ribosomal subunit protein uS17, found in Shigella boydii serotype 18 (strain CDC 3083-94 / BS512).